The following is a 180-amino-acid chain: ATP synthase subunit delta 2 (180 aa).

It belongs to the ATPase delta chain family. As to quaternary structure, F-type ATPases have 2 components, F(1) - the catalytic core - and F(0) - the membrane proton channel. F(1) has five subunits: alpha(3), beta(3), gamma(1), delta(1), epsilon(1). F(0) has three main subunits: a(1), b(2) and c(10-14). The alpha and beta chains form an alternating ring which encloses part of the gamma chain. F(1) is attached to F(0) by a central stalk formed by the gamma and epsilon chains, while a peripheral stalk is formed by the delta and b chains.

The protein localises to the cell inner membrane. Functionally, f(1)F(0) ATP synthase produces ATP from ADP in the presence of a proton or sodium gradient. F-type ATPases consist of two structural domains, F(1) containing the extramembraneous catalytic core and F(0) containing the membrane proton channel, linked together by a central stalk and a peripheral stalk. During catalysis, ATP synthesis in the catalytic domain of F(1) is coupled via a rotary mechanism of the central stalk subunits to proton translocation. This protein is part of the stalk that links CF(0) to CF(1). It either transmits conformational changes from CF(0) to CF(1) or is implicated in proton conduction. The protein is ATP synthase subunit delta 2 of Vibrio campbellii (strain ATCC BAA-1116).